The chain runs to 26 residues: Dermaseptin-B5 (26 aa).

Valine 26 carries the post-translational modification Valine amide.

This sequence belongs to the frog skin active peptide (FSAP) family. Dermaseptin subfamily. Expressed by the skin glands.

Its subcellular location is the secreted. Possesses a potent antimicrobial activity against Gram-positive and Gram-negative bacteria. Probably acts by disturbing membrane functions with its amphipathic structure. The protein is Dermaseptin-B5 of Phyllomedusa bicolor (Two-colored leaf frog).